Consider the following 142-residue polypeptide: Large ribosomal subunit protein uL11 (142 aa).

The interval 86–105 (LKSGSKEPGKQSAGQISRAK) is disordered.

Belongs to the universal ribosomal protein uL11 family. Part of the ribosomal stalk of the 50S ribosomal subunit. Interacts with L10 and the large rRNA to form the base of the stalk. L10 forms an elongated spine to which L12 dimers bind in a sequential fashion forming a multimeric L10(L12)X complex. Post-translationally, one or more lysine residues are methylated.

Its function is as follows. Forms part of the ribosomal stalk which helps the ribosome interact with GTP-bound translation factors. In Chelativorans sp. (strain BNC1), this protein is Large ribosomal subunit protein uL11.